A 514-amino-acid chain; its full sequence is Putative transposase y4uI (514 aa).

In terms of domain architecture, HTH IS408-type spans valine 11 to leucine 93. An Integrase catalytic domain is found at histidine 128 to aspartate 317.

The protein belongs to the transposase IS21/IS408/IS1162 family.

In Sinorhizobium fredii (strain NBRC 101917 / NGR234), this protein is Putative transposase y4uI.